The primary structure comprises 869 residues: Synaptonemal complex protein ZEP1 (869 aa).

3 coiled-coil regions span residues 64–298 (TDLE…SGFT), 330–614 (HEEK…SERY), and 641–713 (RAYH…WKVM). The tract at residues 841–869 (GSHPHPANIGELFSEGSLNPYAEDPYAFG) is disordered.

Interacts with CRC1. As to expression, highly expressed in panicles.

It localises to the nucleus. It is found in the chromosome. Its function is as follows. Required for chromosome synapsis and regulates crossover frequency during meiosis. Acts as a transverse filament protein and constitutes the central element of the synaptonemal complex. In Oryza sativa subsp. japonica (Rice), this protein is Synaptonemal complex protein ZEP1 (ZEP1).